A 714-amino-acid chain; its full sequence is Fatty acid oxidation complex subunit alpha (714 aa).

Positions 1 to 190 (MEMASAFTLN…KLGLVDDVVP (190 aa)) are enoyl-CoA hydratase. The segment at 306 to 714 (APLNSVGILG…FWKTTATDLQ (409 aa)) is 3-hydroxyacyl-CoA dehydrogenase.

The protein in the N-terminal section; belongs to the enoyl-CoA hydratase/isomerase family. This sequence in the central section; belongs to the 3-hydroxyacyl-CoA dehydrogenase family. As to quaternary structure, heterotetramer of two alpha chains (FadJ) and two beta chains (FadI).

Its subcellular location is the cytoplasm. It carries out the reaction a (3S)-3-hydroxyacyl-CoA = a (2E)-enoyl-CoA + H2O. The catalysed reaction is a 4-saturated-(3S)-3-hydroxyacyl-CoA = a (3E)-enoyl-CoA + H2O. The enzyme catalyses a (3S)-3-hydroxyacyl-CoA + NAD(+) = a 3-oxoacyl-CoA + NADH + H(+). It catalyses the reaction (3S)-3-hydroxybutanoyl-CoA = (3R)-3-hydroxybutanoyl-CoA. Its pathway is lipid metabolism; fatty acid beta-oxidation. Its function is as follows. Catalyzes the formation of a hydroxyacyl-CoA by addition of water on enoyl-CoA. Also exhibits 3-hydroxyacyl-CoA epimerase and 3-hydroxyacyl-CoA dehydrogenase activities. This Escherichia coli O45:K1 (strain S88 / ExPEC) protein is Fatty acid oxidation complex subunit alpha.